Reading from the N-terminus, the 229-residue chain is Peptidase E (229 aa).

Catalysis depends on charge relay system residues serine 120, aspartate 135, and histidine 157.

The protein belongs to the peptidase S51 family.

The protein resides in the cytoplasm. The enzyme catalyses Dipeptidase E catalyzes the hydrolysis of dipeptides Asp-|-Xaa. It does not act on peptides with N-terminal Glu, Asn or Gln, nor does it cleave isoaspartyl peptides.. Its function is as follows. Hydrolyzes dipeptides containing N-terminal aspartate residues. May play a role in allowing the cell to use peptide aspartate to spare carbon otherwise required for the synthesis of the aspartate family of amino acids. This chain is Peptidase E, found in Shigella boydii serotype 18 (strain CDC 3083-94 / BS512).